The chain runs to 1177 residues: Transcription-repair-coupling factor (1177 aa).

One can recognise a Helicase ATP-binding domain in the interval 638 to 799 (DMERERPMDR…MLGVRDLSVI (162 aa)). 651 to 658 (GDVGYGKT) serves as a coordination point for ATP. Residues 752–755 (DEEQ) carry the DEEQ box motif. One can recognise a Helicase C-terminal domain in the interval 820–974 (LVREAIEREL…GFKIAMRDLT (155 aa)).

This sequence in the N-terminal section; belongs to the UvrB family. The protein in the C-terminal section; belongs to the helicase family. RecG subfamily.

It localises to the cytoplasm. Couples transcription and DNA repair by recognizing RNA polymerase (RNAP) stalled at DNA lesions. Mediates ATP-dependent release of RNAP and its truncated transcript from the DNA, and recruitment of nucleotide excision repair machinery to the damaged site. Probably required to repair non-bulky DNA lesions. This Bacillus subtilis (strain 168) protein is Transcription-repair-coupling factor.